The chain runs to 825 residues: NT-3 growth factor receptor (825 aa).

The first 31 residues, 1 to 31 (MDVSLCPAKCSFWRIFLLGSVWLDYVGSVLA), serve as a signal peptide directing secretion. Disulfide bonds link Cys-32–Cys-38 and Cys-36–Cys-45. Over 32 to 429 (CPANCVCSKT…TVTHKPEEDT (398 aa)) the chain is Extracellular. Asn-68, Asn-72, and Asn-79 each carry an N-linked (GlcNAc...) asparagine glycan. 2 LRR repeats span residues 104 to 125 (GLQK…AFAK) and 128 to 149 (HLRY…LFQT). Asn-133 and Asn-163 each carry an N-linked (GlcNAc...) asparagine glycan. Residues 160–209 (NFFNCSCDIRWMQLWQEQGEAKLNSQNLYCINTDGSQLPLFRMNISQCDL) form the LRRCT domain. 2 cysteine pairs are disulfide-bonded: Cys-164–Cys-189 and Cys-166–Cys-207. 7 N-linked (GlcNAc...) asparagine glycosylation sites follow: Asn-203, Asn-218, Asn-232, Asn-259, Asn-267, Asn-272, and Asn-294. Ig-like C2-type domains are found at residues 210-300 (PEIS…VALT) and 309-382 (SLEE…IAKN). Cys-231 and Cys-284 are disulfide-bonded. Cys-320 and Cys-362 form a disulfide bridge. 2 N-linked (GlcNAc...) asparagine glycosylation sites follow: Asn-375 and Asn-388. A helical membrane pass occupies residues 430–453 (FGVSIAVGLAAFACVLLVVLFVMI). Residues 454–825 (NKYGRRSKFG…ATPIYLDILG (372 aa)) lie on the Cytoplasmic side of the membrane. Ser-493 carries the phosphoserine modification. Tyr-516 is subject to Phosphotyrosine; by autocatalysis. The 288-residue stretch at 538-825 (IVLKRELGEG…ATPIYLDILG (288 aa)) folds into the Protein kinase domain. Residues 544-552 (LGEGAFGKV) and Lys-572 each bind ATP. Asp-679 functions as the Proton acceptor in the catalytic mechanism. Residues Tyr-705, Tyr-709, and Tyr-710 each carry the phosphotyrosine; by autocatalysis modification.

It belongs to the protein kinase superfamily. Tyr protein kinase family. Insulin receptor subfamily. Exists in a dynamic equilibrium between monomeric (low affinity) and dimeric (high affinity) structures. Binds SH2B2. Interacts with SQSTM1 and KIDINS220. Interacts with PTPRS. Interacts with MAPK8IP3/JIP3. Ligand-mediated auto-phosphorylation.

It is found in the membrane. The enzyme catalyses L-tyrosyl-[protein] + ATP = O-phospho-L-tyrosyl-[protein] + ADP + H(+). In terms of biological role, receptor tyrosine kinase involved in nervous system and probably heart development. Upon binding of its ligand NTF3/neurotrophin-3, NTRK3 autophosphorylates and activates different signaling pathways, including the phosphatidylinositol 3-kinase/AKT and the MAPK pathways, that control cell survival and differentiation. This chain is NT-3 growth factor receptor (NTRK3), found in Pan troglodytes (Chimpanzee).